The following is a 295-amino-acid chain: UDP-3-O-acyl-N-acetylglucosamine deacetylase (295 aa).

Residues H77, H233, and D237 each coordinate Zn(2+). H260 (proton donor) is an active-site residue.

Belongs to the LpxC family. The cofactor is Zn(2+).

The enzyme catalyses a UDP-3-O-[(3R)-3-hydroxyacyl]-N-acetyl-alpha-D-glucosamine + H2O = a UDP-3-O-[(3R)-3-hydroxyacyl]-alpha-D-glucosamine + acetate. It functions in the pathway glycolipid biosynthesis; lipid IV(A) biosynthesis; lipid IV(A) from (3R)-3-hydroxytetradecanoyl-[acyl-carrier-protein] and UDP-N-acetyl-alpha-D-glucosamine: step 2/6. Functionally, catalyzes the hydrolysis of UDP-3-O-myristoyl-N-acetylglucosamine to form UDP-3-O-myristoylglucosamine and acetate, the committed step in lipid A biosynthesis. This is UDP-3-O-acyl-N-acetylglucosamine deacetylase from Solibacter usitatus (strain Ellin6076).